The following is a 99-amino-acid chain: Acylphosphatase-2 (99 aa).

The residue at position 2 (serine 2) is an N-acetylserine. In terms of domain architecture, Acylphosphatase-like spans serine 9–tyrosine 99. Catalysis depends on residues arginine 24 and asparagine 42. Serine 93 carries the phosphoserine modification.

This sequence belongs to the acylphosphatase family.

It catalyses the reaction an acyl phosphate + H2O = a carboxylate + phosphate + H(+). Its physiological role is not yet clear. This chain is Acylphosphatase-2 (ACYP2), found in Homo sapiens (Human).